A 202-amino-acid chain; its full sequence is Putative pre-16S rRNA nuclease (202 aa).

Disordered stretches follow at residues M1–I27 and G170–R202. Over residues G9 to D20 the composition is skewed to basic and acidic residues.

This sequence belongs to the YqgF nuclease family.

It localises to the cytoplasm. Functionally, could be a nuclease involved in processing of the 5'-end of pre-16S rRNA. This chain is Putative pre-16S rRNA nuclease, found in Frankia casuarinae (strain DSM 45818 / CECT 9043 / HFP020203 / CcI3).